The sequence spans 742 residues: Ferric enterobactin receptor PirA (742 aa).

Residues 1–28 (MYPQFRRGHLAAAVLFASSSLLGGQALA) form the signal peptide. A TBDR plug domain is found at 57-184 (QELKQAPGVS…AGGVVNIITK (128 aa)). Disordered stretches follow at residues 91–112 (GVNL…IDIR) and 409–435 (SSLK…PKSK). The segment covering 94-108 (LTGNSSSGQRGNNRQ) has biased composition (polar residues). In terms of domain architecture, TBDR beta-barrel spans 189-742 (RLRGSMTVFT…AYYVSMTTSF (554 aa)). Cysteines 516 and 525 form a disulfide. The TonB C-terminal box signature appears at 725-742 (ATYNEPGRAYYVSMTTSF).

The protein belongs to the TonB-dependent receptor family.

It is found in the cell outer membrane. In terms of biological role, specific receptor for the siderophore ferric enterobactin. Probably involved in the transport of siderophores, including host catecholamines such as L-DOPA. The chain is Ferric enterobactin receptor PirA from Pseudomonas aeruginosa (strain ATCC 15692 / DSM 22644 / CIP 104116 / JCM 14847 / LMG 12228 / 1C / PRS 101 / PAO1).